Reading from the N-terminus, the 169-residue chain is Co-chaperone protein HscB homolog (169 aa).

Residues 2–74 enclose the J domain; the sequence is NYFDLFSLPV…CLRAQYLLLL (73 aa).

It belongs to the HscB family. As to quaternary structure, interacts with HscA and stimulates its ATPase activity.

Its function is as follows. Co-chaperone involved in the maturation of iron-sulfur cluster-containing proteins. Seems to help targeting proteins to be folded toward HscA. In Psychromonas ingrahamii (strain DSM 17664 / CCUG 51855 / 37), this protein is Co-chaperone protein HscB homolog.